The sequence spans 70 residues: Brevinin-1CG3 (70 aa).

Residues 1–22 (MFTLKKSLLLLFFLGTINLSLC) form the signal peptide. Positions 23–44 (EQERNAEEERRDDSDKRDVEVE) are cleaved as a propeptide — removed in mature form. Cysteine 64 and cysteine 70 are oxidised to a cystine.

It belongs to the frog skin active peptide (FSAP) family. Brevinin subfamily. Expressed by the skin glands.

Its subcellular location is the secreted. Antimicrobial peptide active against a variety of Gram-positive and some Gram-negative bacterial strains. Has antifungal activity against a slime mold isolate. Has hemolytic activity against human erythrocytes. This is Brevinin-1CG3 from Amolops chunganensis (Chungan torrent frog).